The primary structure comprises 184 residues: Probable type 3 secretion system regulator AscH (184 aa).

The disordered stretch occupies residues M1–A25.

The protein belongs to the YopR family.

It localises to the secreted. Functionally, may be involved in the regulation of the assembly of the type III secretion system (T3SS), also called injectisome, which is used to inject bacterial effector proteins into eukaryotic host cells. May control the polymerization of the needle. In Aeromonas salmonicida subsp. salmonicida, this protein is Probable type 3 secretion system regulator AscH.